The primary structure comprises 469 residues: ATP-dependent protease ATPase subunit HslU (469 aa).

Residues Ile21, 63 to 68 (GVGKTE), Asp282, Glu347, and Arg419 contribute to the ATP site.

This sequence belongs to the ClpX chaperone family. HslU subfamily. In terms of assembly, a double ring-shaped homohexamer of HslV is capped on each side by a ring-shaped HslU homohexamer. The assembly of the HslU/HslV complex is dependent on binding of ATP.

Its subcellular location is the cytoplasm. Its function is as follows. ATPase subunit of a proteasome-like degradation complex; this subunit has chaperone activity. The binding of ATP and its subsequent hydrolysis by HslU are essential for unfolding of protein substrates subsequently hydrolyzed by HslV. HslU recognizes the N-terminal part of its protein substrates and unfolds these before they are guided to HslV for hydrolysis. This Petrotoga mobilis (strain DSM 10674 / SJ95) protein is ATP-dependent protease ATPase subunit HslU.